Reading from the N-terminus, the 237-residue chain is Bax inhibitor 1 (237 aa).

Residues 1-29 (MNIFDRKINFDALLKFSHITPSTQQHLKK) are Cytoplasmic-facing. Lysine 7 is covalently cross-linked (Glycyl lysine isopeptide (Lys-Gly) (interchain with G-Cter in ubiquitin)). A helical transmembrane segment spans residues 30–50 (VYASFALCMFVAAAGAYVHVV). Residues 51–52 (TR) lie on the Lumenal side of the membrane. A helical transmembrane segment spans residues 53 to 73 (FIQAGLLSALGSLGLMIWLMA). Residues 74–86 (TPHSHETEQKRLG) are Cytoplasmic-facing. The helical transmembrane segment at 87-107 (LLAGFAFLTGVGLGPALDLCI) threads the bilayer. The Lumenal segment spans residues 108–112 (AINPS). A helical transmembrane segment spans residues 113–133 (ILPTAFMGTAMIFTCFTLSAL). Residues 134 to 139 (YARRRS) lie on the Cytoplasmic side of the membrane. Residues 140-160 (YLFLGGILMSAMSLMVLSSLG) traverse the membrane as a helical segment. The Lumenal portion of the chain corresponds to 161–166 (NLFFGS). The helical transmembrane segment at 167–187 (IWLFQANLYVGLVVMCGFVLF) threads the bilayer. Residues 188–206 (DTQLIIEKAENGDKDYIWH) lie on the Cytoplasmic side of the membrane. The segment at residues 207–227 (CVDLFSDFVTLFRKLMMILAM) is an intramembrane region (helical). Over 228–237 (NEKDKKKEKK) the chain is Cytoplasmic.

It belongs to the BI1 family. As to quaternary structure, interacts with BCL2 and BCL2L1. Interacts with ERN1. In terms of processing, ubiquitinated by BFAR, leading to proteasomal degradation.

The protein resides in the endoplasmic reticulum membrane. In terms of biological role, endoplasmic reticulum (ER)-resident protein that confers cellular protection as an anti-apoptotic protein by limiting multiple stress-inducing pathways surrounding the endoplasmic reticulum and mitochondria. Inhibits the activities of the key sensor for the endoplasmic reticulum unfolded protein response IRE1alpha/ERN1 both directly and by blocking BAX/BAK binding. Modulates ER calcium homeostasis by acting as a calcium-leak channel. Negatively regulates autophagy and autophagosome formation, especially during periods of nutrient deprivation, and reduces cell survival during starvation. The chain is Bax inhibitor 1 (TMBIM6) from Sus scrofa (Pig).